The following is a 540-amino-acid chain: Glucose-6-phosphate isomerase (540 aa).

The active-site Proton donor is Glu346. Residues His377 and Lys505 contribute to the active site.

It belongs to the GPI family.

It is found in the cytoplasm. It carries out the reaction alpha-D-glucose 6-phosphate = beta-D-fructose 6-phosphate. It functions in the pathway carbohydrate biosynthesis; gluconeogenesis. The protein operates within carbohydrate degradation; glycolysis; D-glyceraldehyde 3-phosphate and glycerone phosphate from D-glucose: step 2/4. In terms of biological role, catalyzes the reversible isomerization of glucose-6-phosphate to fructose-6-phosphate. The polypeptide is Glucose-6-phosphate isomerase (Francisella tularensis subsp. mediasiatica (strain FSC147)).